The chain runs to 244 residues: GTP cyclohydrolase 1 type 2 homolog (244 aa).

His65, His66, Asp102, His216, and Glu220 together coordinate a divalent metal cation.

It belongs to the GTP cyclohydrolase I type 2/NIF3 family. Homohexamer; trimer of dimers, that forms a hollow cage-like architecture.

DNA-binding protein exhibiting the ability to bind to both single-stranded and double-stranded DNA. The polypeptide is GTP cyclohydrolase 1 type 2 homolog (Methanocaldococcus jannaschii (strain ATCC 43067 / DSM 2661 / JAL-1 / JCM 10045 / NBRC 100440) (Methanococcus jannaschii)).